The sequence spans 408 residues: UDP-N-acetylglucosamine--dolichyl-phosphate N-acetylglucosaminephosphotransferase (408 aa).

Transmembrane regions (helical) follow at residues 6–26 (SLLG…IYLP) and 32–52 (WIIV…YKLI). Residues Asp-68 and Glu-84 each contribute to the UDP-N-acetyl-alpha-D-glucosamine site. 2 helical membrane passes run 87–107 (GICV…FQWF) and 120–140 (AALT…VLNL). Residue Lys-145 participates in dolichyl phosphate binding. 2 helical membrane-spanning segments follow: residues 147–167 (ILPM…TTVV) and 181–201 (LGVV…LAIF). Residue 200 to 208 (IFCTNSINI) coordinates dolichyl phosphate. Asn-207 lines the Mg(2+) pocket. Residue Asn-213 participates in UDP-N-acetyl-alpha-D-glucosamine binding. The next 2 helical transmembrane spans lie at 221-241 (VVIA…ASSV) and 258-278 (HLFS…LLFY). Asp-289 serves as a coordination point for Mg(2+). The helical transmembrane segment at 297 to 317 (MCFAVVAILCHFSKTLLLFFI) threads the bilayer. Position 338-340 (338-340 (RHR)) interacts with UDP-N-acetyl-alpha-D-glucosamine. Transmembrane regions (helical) follow at residues 351–371 (MEAI…TGPL) and 376–396 (LCVY…GIRY).

It belongs to the glycosyltransferase 4 family. As to quaternary structure, homodimer. It depends on Mg(2+) as a cofactor.

It localises to the endoplasmic reticulum membrane. The enzyme catalyses a di-trans,poly-cis-dolichyl phosphate + UDP-N-acetyl-alpha-D-glucosamine = an N-acetyl-alpha-D-glucosaminyl-diphospho-di-trans,poly-cis-dolichol + UMP. It participates in protein modification; protein glycosylation. Its activity is regulated as follows. Inhibited by natural nucleoside antibiotic tunicamycin, which acts as a structural analog and competitor of UDP-GlcNAc. Its function is as follows. UDP-N-acetylglucosamine--dolichyl-phosphate N-acetylglucosaminephosphotransferase that operates in the biosynthetic pathway of dolichol-linked oligosaccharides, the glycan precursors employed in protein asparagine (N)-glycosylation. The assembly of dolichol-linked oligosaccharides begins on the cytosolic side of the endoplasmic reticulum membrane and finishes in its lumen. The sequential addition of sugars to dolichol pyrophosphate produces dolichol-linked oligosaccharides containing fourteen sugars, including two GlcNAcs, nine mannoses and three glucoses. Once assembled, the oligosaccharide is transferred from the lipid to nascent proteins by oligosaccharyltransferases. Catalyzes the initial step of dolichol-linked oligosaccharide biosynthesis, transfering GlcNAc-1-P from cytosolic UDP-GlcNAc onto the carrier lipid dolichyl phosphate (P-dolichol), yielding GlcNAc-P-P-dolichol embedded in the cytoplasmic leaflet of the endoplasmic reticulum membrane. The polypeptide is UDP-N-acetylglucosamine--dolichyl-phosphate N-acetylglucosaminephosphotransferase (alg7) (Dictyostelium discoideum (Social amoeba)).